We begin with the raw amino-acid sequence, 74 residues long: Defensin (74 aa).

Residues 1–21 (MRGIYICLVFVLVCGLVSGLA) form the signal peptide. Residues 22–34 (DVPAESEMAHLRV) constitute a propeptide that is removed on maturation. Disulfide bonds link C40–C61, C47–C69, and C51–C71.

As to expression, expressed in the hemocytes, fat body and ovaries.

Its subcellular location is the secreted. Antibacterial peptide mostly active against Gram-positive bacteria. In Rhipicephalus microplus (Cattle tick), this protein is Defensin.